Consider the following 254-residue polypeptide: uncharacterized protein (254 aa).

Residues 6–239 enclose the ABC transporter domain; sequence LSVDGVEFAY…NIKAVYGVDA (234 aa). 38-45 contacts ATP; sequence GVNGAGKS.

Belongs to the ABC transporter superfamily.

This is an uncharacterized protein from Methanocaldococcus jannaschii (strain ATCC 43067 / DSM 2661 / JAL-1 / JCM 10045 / NBRC 100440) (Methanococcus jannaschii).